Consider the following 1252-residue polypeptide: Putative late blight resistance protein homolog R1B-11 (1252 aa).

The stretch at 543-566 forms a coiled coil; sequence RYSDSLAFLKNQLQVIQTEFESLQ. NB-ARC domains lie at 684–736 and 786–830; these read SVRR…RSRI and SYHV…SSEG. 7 LRR repeats span residues 955-980, 998-1026, 1077-1100, 1103-1125, 1126-1149, 1187-1212, and 1213-1236; these read FKFL…PYLR, LWNL…VWDM, LKHL…KVSS, FPKL…ADDA, FPNL…CFTD, LVII…RLSS, and LPGI…DVDA. The HMA domain maps to 1188 to 1252; sequence VIIKKLVLKF…VGKLNKRDML (65 aa).

This sequence belongs to the disease resistance NB-LRR family.

It localises to the cytoplasm. The protein resides in the membrane. Its function is as follows. Confers resistance to late blight (Phytophthora infestans) races carrying the avirulence gene Avr1. Resistance proteins guard the plant against pathogens that contain an appropriate avirulence protein via an indirect interaction with this avirulence protein. That triggers a defense system including the hypersensitive response, which restricts the pathogen growth. The polypeptide is Putative late blight resistance protein homolog R1B-11 (R1B-11) (Solanum demissum (Wild potato)).